The chain runs to 199 residues: Holliday junction branch migration complex subunit RuvA (199 aa).

The domain I stretch occupies residues 1 to 64; it reads MIAKLTGRLD…EDFLRLLGFA (64 aa). Residues 65–143 are domain II; the sequence is RAEERDWFRL…ALGGISGSGP (79 aa). Residues 144-146 form a flexible linker region; sequence ALS. Positions 147 to 199 are domain III; that stretch reads AAAGPVGDAIAALTGLGFKPGEASAAVAAANEELGADASLDALVRVALKKAAK.

The protein belongs to the RuvA family. As to quaternary structure, homotetramer. Forms an RuvA(8)-RuvB(12)-Holliday junction (HJ) complex. HJ DNA is sandwiched between 2 RuvA tetramers; dsDNA enters through RuvA and exits via RuvB. An RuvB hexamer assembles on each DNA strand where it exits the tetramer. Each RuvB hexamer is contacted by two RuvA subunits (via domain III) on 2 adjacent RuvB subunits; this complex drives branch migration. In the full resolvosome a probable DNA-RuvA(4)-RuvB(12)-RuvC(2) complex forms which resolves the HJ.

The protein localises to the cytoplasm. Its function is as follows. The RuvA-RuvB-RuvC complex processes Holliday junction (HJ) DNA during genetic recombination and DNA repair, while the RuvA-RuvB complex plays an important role in the rescue of blocked DNA replication forks via replication fork reversal (RFR). RuvA specifically binds to HJ cruciform DNA, conferring on it an open structure. The RuvB hexamer acts as an ATP-dependent pump, pulling dsDNA into and through the RuvAB complex. HJ branch migration allows RuvC to scan DNA until it finds its consensus sequence, where it cleaves and resolves the cruciform DNA. This Sphingopyxis alaskensis (strain DSM 13593 / LMG 18877 / RB2256) (Sphingomonas alaskensis) protein is Holliday junction branch migration complex subunit RuvA.